The primary structure comprises 128 residues: Aspartate 1-decarboxylase (128 aa).

The active-site Schiff-base intermediate with substrate; via pyruvic acid is the Ser25. At Ser25 the chain carries Pyruvic acid (Ser). A substrate-binding site is contributed by Thr57. The active-site Proton donor is Tyr58. 73-75 contributes to the substrate binding site; it reads GSA.

This sequence belongs to the PanD family. Heterooctamer of four alpha and four beta subunits. Pyruvate is required as a cofactor. In terms of processing, is synthesized initially as an inactive proenzyme, which is activated by self-cleavage at a specific serine bond to produce a beta-subunit with a hydroxyl group at its C-terminus and an alpha-subunit with a pyruvoyl group at its N-terminus.

The protein localises to the cytoplasm. It carries out the reaction L-aspartate + H(+) = beta-alanine + CO2. The protein operates within cofactor biosynthesis; (R)-pantothenate biosynthesis; beta-alanine from L-aspartate: step 1/1. Functionally, catalyzes the pyruvoyl-dependent decarboxylation of aspartate to produce beta-alanine. The chain is Aspartate 1-decarboxylase from Burkholderia vietnamiensis (strain G4 / LMG 22486) (Burkholderia cepacia (strain R1808)).